The chain runs to 253 residues: Imidazole glycerol phosphate synthase subunit HisF (253 aa).

Catalysis depends on residues Asp11 and Asp130.

This sequence belongs to the HisA/HisF family. Heterodimer of HisH and HisF.

Its subcellular location is the cytoplasm. The enzyme catalyses 5-[(5-phospho-1-deoxy-D-ribulos-1-ylimino)methylamino]-1-(5-phospho-beta-D-ribosyl)imidazole-4-carboxamide + L-glutamine = D-erythro-1-(imidazol-4-yl)glycerol 3-phosphate + 5-amino-1-(5-phospho-beta-D-ribosyl)imidazole-4-carboxamide + L-glutamate + H(+). The protein operates within amino-acid biosynthesis; L-histidine biosynthesis; L-histidine from 5-phospho-alpha-D-ribose 1-diphosphate: step 5/9. In terms of biological role, IGPS catalyzes the conversion of PRFAR and glutamine to IGP, AICAR and glutamate. The HisF subunit catalyzes the cyclization activity that produces IGP and AICAR from PRFAR using the ammonia provided by the HisH subunit. This chain is Imidazole glycerol phosphate synthase subunit HisF, found in Ruegeria pomeroyi (strain ATCC 700808 / DSM 15171 / DSS-3) (Silicibacter pomeroyi).